A 605-amino-acid polypeptide reads, in one-letter code: Conglutin beta 7 (605 aa).

Residues 1 to 30 (MARMRVRFPTLVLLLGILFLMAVSIGIAYG) form the signal peptide. The segment covering 37-105 (NHERPGEREH…REPCREREQE (69 aa)) has biased composition (basic and acidic residues). Disordered regions lie at residues 37-193 (NHER…RFQT), 346-367 (LGNE…SYQD), and 382-405 (LRKH…NLRS). Residues 140-149 (QGSSSSSRKQ) show a composition bias toward low complexity. Residues 150–179 (SGYERRQYHERREQRDEKEKEQDSRSDSRR) show a composition bias toward basic and acidic residues. Positions 184-342 (YHFSSERFQT…TFNTRYEEIQ (159 aa)) constitute a Cupin type-1 1 domain. Residues 401–563 (FNLRSNESIY…TFPGSAQDVE (163 aa)) form the Cupin type-1 2 domain. Residues Asn406 and Asn513 are each glycosylated (N-linked (GlcNAc...) asparagine). The tract at residues 574 to 593 (FANAQPQQKQQREKEGRRGR) is disordered.

Belongs to the 7S seed storage protein family. Component of globulins complexes which accumulate in seeds.

Functionally, seed storage protein. Accumulates during seed development and is hydrolyzed after germination to provide a carbon and nitrogen source for the developing seedling. The protein is Conglutin beta 7 of Lupinus angustifolius (Narrow-leaved blue lupine).